Here is a 354-residue protein sequence, read N- to C-terminus: Neutral protease 2 homolog BCIN_12g06300 (354 aa).

An N-terminal signal peptide occupies residues 1-19; that stretch reads MRSFSKILAVASLAAIANS. Positions 20–179 are excised as a propeptide; the sequence is AVLKRDNNVL…PSSIDRRTVL (160 aa). 2 disulfide bridges follow: cysteine 183–cysteine 255 and cysteine 262–cysteine 280. Position 305 (histidine 305) interacts with Zn(2+). Residue glutamate 306 is part of the active site. Residues histidine 309 and aspartate 320 each contribute to the Zn(2+) site.

This sequence belongs to the peptidase M35 family. Zn(2+) is required as a cofactor.

The protein resides in the secreted. It catalyses the reaction Preferential cleavage of bonds with hydrophobic residues in P1'. Also 3-Asn-|-Gln-4 and 8-Gly-|-Ser-9 bonds in insulin B chain.. Secreted metalloproteinase that allows assimilation of proteinaceous substrates. Shows high activities on basic nuclear substrates such as histone and protamine. The polypeptide is Neutral protease 2 homolog BCIN_12g06300 (Botryotinia fuckeliana (strain B05.10) (Noble rot fungus)).